A 240-amino-acid polypeptide reads, in one-letter code: Uridylate kinase (240 aa).

ATP is bound at residue 12–15; it reads KLSG. Residues 20 to 25 form an involved in allosteric activation by GTP region; sequence GEQGNG. G54 provides a ligand contact to UMP. Residues G55 and R59 each coordinate ATP. Residues D74 and 135–142 contribute to the UMP site; that span reads TGNPYFST. The ATP site is built by N163, Y169, and D172.

It belongs to the UMP kinase family. In terms of assembly, homohexamer. Interacts with BrxC.

Its subcellular location is the cytoplasm. The catalysed reaction is UMP + ATP = UDP + ADP. It functions in the pathway pyrimidine metabolism; CTP biosynthesis via de novo pathway; UDP from UMP (UMPK route): step 1/1. Its activity is regulated as follows. Allosterically activated by GTP. Can also be activated by dGTP and 3'-anthraniloyl-2'-deoxyguanosine-5'-triphosphate (Ant-dGTP). Inhibited by UTP, 5-bromo-UTP and 5-iodo-UTP. Catalyzes the reversible phosphorylation of UMP to UDP, with ATP or dATP as the most efficient phosphate donors. Is also able to phosphorylate 5-fluoro-UMP and 6-aza-UMP. This Bacillus subtilis (strain 168) protein is Uridylate kinase (pyrH).